A 468-amino-acid polypeptide reads, in one-letter code: UDP-N-acetylmuramate--L-alanine ligase (468 aa).

Gly-112–Thr-118 is a binding site for ATP.

The protein belongs to the MurCDEF family.

It localises to the cytoplasm. It carries out the reaction UDP-N-acetyl-alpha-D-muramate + L-alanine + ATP = UDP-N-acetyl-alpha-D-muramoyl-L-alanine + ADP + phosphate + H(+). Its pathway is cell wall biogenesis; peptidoglycan biosynthesis. Functionally, cell wall formation. This chain is UDP-N-acetylmuramate--L-alanine ligase, found in Koribacter versatilis (strain Ellin345).